Here is a 175-residue protein sequence, read N- to C-terminus: Peptide methionine sulfoxide reductase MsrA (175 aa).

Cysteine 10 is an active-site residue.

The protein belongs to the MsrA Met sulfoxide reductase family.

The catalysed reaction is L-methionyl-[protein] + [thioredoxin]-disulfide + H2O = L-methionyl-(S)-S-oxide-[protein] + [thioredoxin]-dithiol. It catalyses the reaction [thioredoxin]-disulfide + L-methionine + H2O = L-methionine (S)-S-oxide + [thioredoxin]-dithiol. In terms of biological role, has an important function as a repair enzyme for proteins that have been inactivated by oxidation. Catalyzes the reversible oxidation-reduction of methionine sulfoxide in proteins to methionine. The chain is Peptide methionine sulfoxide reductase MsrA from Clavibacter sepedonicus (Clavibacter michiganensis subsp. sepedonicus).